Reading from the N-terminus, the 98-residue chain is NADH-ubiquinone oxidoreductase chain 4L (98 aa).

3 helical membrane-spanning segments follow: residues 1 to 21 (MPVVYVNIFLAFIVSLTGLLI), 29 to 49 (SLLCLEGMMLSLFVMLTVTVL), and 61 to 81 (IILLVFAACEAALGLSLLVMV).

Belongs to the complex I subunit 4L family. In terms of assembly, core subunit of respiratory chain NADH dehydrogenase (Complex I) which is composed of 45 different subunits.

The protein localises to the mitochondrion inner membrane. The enzyme catalyses a ubiquinone + NADH + 5 H(+)(in) = a ubiquinol + NAD(+) + 4 H(+)(out). Functionally, core subunit of the mitochondrial membrane respiratory chain NADH dehydrogenase (Complex I) which catalyzes electron transfer from NADH through the respiratory chain, using ubiquinone as an electron acceptor. Part of the enzyme membrane arm which is embedded in the lipid bilayer and involved in proton translocation. This Helarctos malayanus (Malayan sun bear) protein is NADH-ubiquinone oxidoreductase chain 4L (MT-ND4L).